A 148-amino-acid chain; its full sequence is uncharacterized protein (148 aa).

A signal peptide spans Met1–Ala20.

This is an uncharacterized protein from Haemophilus influenzae (strain ATCC 51907 / DSM 11121 / KW20 / Rd).